The chain runs to 189 residues: ECF RNA polymerase sigma-E factor (189 aa).

The interval 1-153 is binds RNAP core; it reads MAEQLTDQAL…TAITLRELEG (153 aa). The sigma-70 factor domain-2 stretch occupies residues 25–92; sequence LVSRYQNKVA…KNYLTAQGRR (68 aa). The Polymerase core binding motif lies at 48 to 61; it reads DVVQESFIKAYRSI. The sigma-70 factor domain-4 stretch occupies residues 129–180; that stretch reads RIVFDTIHNLPEDLKTAITLRELEGLSYEDIAEIMDCPVGTVRSRIFRAREM. Positions 156 to 175 form a DNA-binding region, H-T-H motif; the sequence is YEDIAEIMDCPVGTVRSRIF.

This sequence belongs to the sigma-70 factor family. ECF subfamily. As to quaternary structure, interacts transiently with the RNAP catalytic core formed by RpoA, RpoB, RpoC and RpoZ (2 alpha, 1 beta, 1 beta' and 1 omega subunit) to form the RNAP holoenzyme that can initiate transcription. Interacts 1:1 with anti-sigma-E factor RseA which prevents binding to RNAP catalytic core.

Its subcellular location is the cytoplasm. With respect to regulation, ECF sigma-E is held in an inactive form by its cognate anti-sigma factor (RseA) until released by regulated intramembrane proteolysis (RIP). RIP occurs when an extracytoplasmic signal (periplasmic stress and excess LPS) triggers a concerted proteolytic cascade to transmit information and elicit cellular responses. The anti-sigma factor RseA is an inner membrane protein, binding sigma-E in the cytoplasm and RseB in the periplasm. RseA is first cut extracytoplasmically (site-1 protease, S1P, by DegS), then within the membrane itself (site-2 protease, S2P, by RseP), while cytoplasmic proteases (predominantly ClpX-ClpP) finish degrading the regulatory protein, liberating sigma-E. Degradation of RseA requires 2 signals to activate DegS; an outer membrane protein (OMP) signal activates DegS, while an LPS signal causes release of RseB from RseA, freeing RseA to be cleaved. In terms of biological role, sigma factors are initiation factors that promote the attachment of RNA polymerase (RNAP) to specific initiation sites and are then released. Extracytoplasmic function (ECF) sigma-E controls the envelope stress response, responding to periplasmic protein stress, increased levels of periplasmic lipopolysaccharide (LPS) as well as heat shock and oxidative stress; it controls protein processing in the extracytoplasmic compartment. The sequence is that of ECF RNA polymerase sigma-E factor (rpoE) from Haemophilus influenzae (strain ATCC 51907 / DSM 11121 / KW20 / Rd).